Consider the following 333-residue polypeptide: Acetyltransferase Pat (333 aa).

Residues 88-91 (GEIA), 98-99 (RS), and Arg138 contribute to the 3',5'-cyclic AMP site. The 163-residue stretch at 156–318 (LMLRPVLPGD…GELSLGREMV (163 aa)) folds into the N-acetyltransferase domain. His173 is a substrate binding site. Residue Asp214 participates in Mg(2+) binding. Substrate contacts are provided by residues 238–240 (FTV), 246–251 (GRGIGS), Asn277, and Arg286.

As to quaternary structure, homodimer. Mg(2+) is required as a cofactor.

Its activity is regulated as follows. Autoinhibited and allosterically activated by 3,5-cyclic adenosine monophosphate (cAMP). An extensive conformational rearrangement relieves this autoinhibition by means of a substrate-mimicking lid that covers the protein-substrate binding surface. Functionally, catalyzes specifically the acetylation of the epsilon-amino group of a highly conserved lysine residue in acetyl-CoA synthetase (ACS). This acetylation results in the inactivation of ACS activity and could be important for mycobacteria to adjust to environmental changes. The sequence is that of Acetyltransferase Pat from Mycobacterium tuberculosis (strain ATCC 25618 / H37Rv).